Reading from the N-terminus, the 95-residue chain is Aspartyl/glutamyl-tRNA(Asn/Gln) amidotransferase subunit C (95 aa).

Belongs to the GatC family. As to quaternary structure, heterotrimer of A, B and C subunits.

It carries out the reaction L-glutamyl-tRNA(Gln) + L-glutamine + ATP + H2O = L-glutaminyl-tRNA(Gln) + L-glutamate + ADP + phosphate + H(+). The enzyme catalyses L-aspartyl-tRNA(Asn) + L-glutamine + ATP + H2O = L-asparaginyl-tRNA(Asn) + L-glutamate + ADP + phosphate + 2 H(+). In terms of biological role, allows the formation of correctly charged Asn-tRNA(Asn) or Gln-tRNA(Gln) through the transamidation of misacylated Asp-tRNA(Asn) or Glu-tRNA(Gln) in organisms which lack either or both of asparaginyl-tRNA or glutaminyl-tRNA synthetases. The reaction takes place in the presence of glutamine and ATP through an activated phospho-Asp-tRNA(Asn) or phospho-Glu-tRNA(Gln). This Chlorobium chlorochromatii (strain CaD3) protein is Aspartyl/glutamyl-tRNA(Asn/Gln) amidotransferase subunit C.